The chain runs to 315 residues: DNA-directed RNA polymerase subunit alpha (315 aa).

The segment at 1 to 229 (MLDSKLKAPV…EHLTYFSNPQ (229 aa)) is alpha N-terminal domain (alpha-NTD). Positions 247-315 (EQEEELDLPL…LEKKGFTLKE (69 aa)) are alpha C-terminal domain (alpha-CTD).

This sequence belongs to the RNA polymerase alpha chain family. In terms of assembly, homodimer. The RNAP catalytic core consists of 2 alpha, 1 beta, 1 beta' and 1 omega subunit. When a sigma factor is associated with the core the holoenzyme is formed, which can initiate transcription.

It catalyses the reaction RNA(n) + a ribonucleoside 5'-triphosphate = RNA(n+1) + diphosphate. Functionally, DNA-dependent RNA polymerase catalyzes the transcription of DNA into RNA using the four ribonucleoside triphosphates as substrates. The protein is DNA-directed RNA polymerase subunit alpha of Thermus thermophilus (strain ATCC BAA-163 / DSM 7039 / HB27).